The chain runs to 238 residues: Ribonuclease PH (238 aa).

Residues R86 and 124–126 contribute to the phosphate site; that span reads GTR.

The protein belongs to the RNase PH family. As to quaternary structure, homohexameric ring arranged as a trimer of dimers.

It carries out the reaction tRNA(n+1) + phosphate = tRNA(n) + a ribonucleoside 5'-diphosphate. Functionally, phosphorolytic 3'-5' exoribonuclease that plays an important role in tRNA 3'-end maturation. Removes nucleotide residues following the 3'-CCA terminus of tRNAs; can also add nucleotides to the ends of RNA molecules by using nucleoside diphosphates as substrates, but this may not be physiologically important. Probably plays a role in initiation of 16S rRNA degradation (leading to ribosome degradation) during starvation. The chain is Ribonuclease PH from Aliivibrio salmonicida (strain LFI1238) (Vibrio salmonicida (strain LFI1238)).